A 486-amino-acid chain; its full sequence is MTTTAEKTDRPGKPGSSDTSGRVVRVTGPVVDVEFPRGSIPELFNALHAEITFESLAKTLTLEVAQHLGDNLVRTISLQPTDGLVRGVEVIDTGRSISVPVGEGVKGHVFNALGDCLDEPGYGEKFEHWSIHRKPPAFEELEPRTEMLETGLKVVDLLTPYVRGGKIALFGGAGVGKTVLIQEMINRIARNFGGTSVFAGVGERTREGNDLWVELAEANVLKDTALVFGQMDEPPGTRMRVALSALTMAEWFRDEQGQDVLLFIDNIFRFTQAGSEVSTLLGRMPSAVGYQPTLADEMGELQERITSTRGRSITSMQAVYVPADDYTDPAPATTFAHLDATTELSRAVFSKGIFPAVDPLASSSTILDPSVVGDEHYRVAQEVIRILQRYKDLQDIIAILGIDELSEEDKQLVNRARRIERFLSQNMMAAEQFTGQPGSTVPVKETIEAFDRLCKGDFDHVPEQAFFLIGGLDDLAKKAESLGAKL.

Positions 1–12 are enriched in basic and acidic residues; it reads MTTTAEKTDRPG. Residues 1–22 are disordered; that stretch reads MTTTAEKTDRPGKPGSSDTSGR. 171-178 contacts ATP; it reads GGAGVGKT.

Belongs to the ATPase alpha/beta chains family. In terms of assembly, F-type ATPases have 2 components, CF(1) - the catalytic core - and CF(0) - the membrane proton channel. CF(1) has five subunits: alpha(3), beta(3), gamma(1), delta(1), epsilon(1). CF(0) has three main subunits: a(1), b(2) and c(9-12). The alpha and beta chains form an alternating ring which encloses part of the gamma chain. CF(1) is attached to CF(0) by a central stalk formed by the gamma and epsilon chains, while a peripheral stalk is formed by the delta and b chains.

Its subcellular location is the cell membrane. The catalysed reaction is ATP + H2O + 4 H(+)(in) = ADP + phosphate + 5 H(+)(out). In terms of biological role, produces ATP from ADP in the presence of a proton gradient across the membrane. The catalytic sites are hosted primarily by the beta subunits. The protein is ATP synthase subunit beta of Mycobacterium tuberculosis (strain ATCC 25177 / H37Ra).